A 308-amino-acid polypeptide reads, in one-letter code: Pantothenate synthetase (308 aa).

Residue Met39–His46 coordinates ATP. The active-site Proton donor is His46. Gln71 provides a ligand contact to (R)-pantoate. Gln71 provides a ligand contact to beta-alanine. Gly157–Asp160 provides a ligand contact to ATP. Gln163 provides a ligand contact to (R)-pantoate. ATP contacts are provided by residues Val186 and Met194 to Arg197. Residues Ile286–Asn308 are disordered.

It belongs to the pantothenate synthetase family. As to quaternary structure, homodimer.

It localises to the cytoplasm. It carries out the reaction (R)-pantoate + beta-alanine + ATP = (R)-pantothenate + AMP + diphosphate + H(+). Its pathway is cofactor biosynthesis; (R)-pantothenate biosynthesis; (R)-pantothenate from (R)-pantoate and beta-alanine: step 1/1. Functionally, catalyzes the condensation of pantoate with beta-alanine in an ATP-dependent reaction via a pantoyl-adenylate intermediate. In Mycolicibacterium paratuberculosis (strain ATCC BAA-968 / K-10) (Mycobacterium paratuberculosis), this protein is Pantothenate synthetase.